The chain runs to 126 residues: Phosphoribosyl-AMP cyclohydrolase (126 aa).

Asp76 provides a ligand contact to Mg(2+). Cys77 is a Zn(2+) binding site. Mg(2+) contacts are provided by Asp78 and Asp80. Positions 94 and 101 each coordinate Zn(2+).

Belongs to the PRA-CH family. Homodimer. Mg(2+) serves as cofactor. Requires Zn(2+) as cofactor.

It is found in the cytoplasm. The enzyme catalyses 1-(5-phospho-beta-D-ribosyl)-5'-AMP + H2O = 1-(5-phospho-beta-D-ribosyl)-5-[(5-phospho-beta-D-ribosylamino)methylideneamino]imidazole-4-carboxamide. It participates in amino-acid biosynthesis; L-histidine biosynthesis; L-histidine from 5-phospho-alpha-D-ribose 1-diphosphate: step 3/9. Functionally, catalyzes the hydrolysis of the adenine ring of phosphoribosyl-AMP. The chain is Phosphoribosyl-AMP cyclohydrolase from Vesicomyosocius okutanii subsp. Calyptogena okutanii (strain HA).